A 273-amino-acid polypeptide reads, in one-letter code: 4-hydroxy-tetrahydrodipicolinate reductase (273 aa).

NAD(+) contacts are provided by residues 12-17 and E38; that span reads GAGGRM. NADP(+) is bound at residue R39. NAD(+)-binding positions include 102-104 and 126-129; these read GTT and AANF. Residue H159 is the Proton donor/acceptor of the active site. (S)-2,3,4,5-tetrahydrodipicolinate is bound at residue H160. K163 acts as the Proton donor in catalysis. 169-170 contributes to the (S)-2,3,4,5-tetrahydrodipicolinate binding site; it reads GT.

The protein belongs to the DapB family. Homotetramer.

It localises to the cytoplasm. It carries out the reaction (S)-2,3,4,5-tetrahydrodipicolinate + NAD(+) + H2O = (2S,4S)-4-hydroxy-2,3,4,5-tetrahydrodipicolinate + NADH + H(+). The enzyme catalyses (S)-2,3,4,5-tetrahydrodipicolinate + NADP(+) + H2O = (2S,4S)-4-hydroxy-2,3,4,5-tetrahydrodipicolinate + NADPH + H(+). It functions in the pathway amino-acid biosynthesis; L-lysine biosynthesis via DAP pathway; (S)-tetrahydrodipicolinate from L-aspartate: step 4/4. Its function is as follows. Catalyzes the conversion of 4-hydroxy-tetrahydrodipicolinate (HTPA) to tetrahydrodipicolinate. The protein is 4-hydroxy-tetrahydrodipicolinate reductase of Photorhabdus laumondii subsp. laumondii (strain DSM 15139 / CIP 105565 / TT01) (Photorhabdus luminescens subsp. laumondii).